The sequence spans 457 residues: Antizyme inhibitor 2 (457 aa).

The tract at residues 115-138 (QVAQIKYAAKHGVRLLSFDNEVEL) is necessary for polyamine uptake stimulation.

The protein belongs to the Orn/Lys/Arg decarboxylase class-II family. ODC antizyme inhibitor subfamily. As to quaternary structure, monomer. Interacts with OAZ1, OAZ2 and OAZ3; this interaction disrupts the interaction between the antizyme and ODC1. Does not form a heterodimer with ODC1. Post-translationally, ubiquitinated, leading to its proteasomal degradation; a process that is reduced in presence of antizymes. May also be degraded through the lysosomal degradative pathway in a proteasomal-independent manner.

Its subcellular location is the nucleus. The protein localises to the cytoplasm. The protein resides in the perinuclear region. It localises to the membrane. It is found in the cytoplasmic vesicle. Its subcellular location is the endoplasmic reticulum-Golgi intermediate compartment. The protein localises to the golgi apparatus. The protein resides in the cis-Golgi network. It localises to the trans-Golgi network. It is found in the cytoplasmic granule. Its subcellular location is the cell projection. The protein localises to the axon. The protein resides in the dendrite. It localises to the perikaryon. Antizyme inhibitor (AZI) protein that positively regulates ornithine decarboxylase (ODC) activity and polyamine uptake. AZI is an enzymatically inactive ODC homolog that counteracts the negative effect of ODC antizymes (AZs) OAZ1, OAZ2 and OAZ3 on ODC activity by competing with ODC for antizyme-binding. Inhibits antizyme-dependent ODC degradation and releases ODC monomers from their inactive complex with antizymes, leading to formation of the catalytically active ODC homodimer and restoring polyamine production. Participates in the morphological integrity of the trans-Golgi network (TGN) and functions as a regulator of intracellular secretory vesicle trafficking. In Rattus norvegicus (Rat), this protein is Antizyme inhibitor 2 (Azin2).